The chain runs to 453 residues: Transmembrane protease serine 3 (453 aa).

Residues 1 to 48 (MGENDPPAAEAPFSFRSLFGLDDLKISPVAPDGDAVAAQILSLLPLKF) are Cytoplasmic-facing. Residues 49–69 (FPIIVIGIIALILALAIGLGI) traverse the membrane as a helical; Signal-anchor for type II membrane protein segment. The Extracellular portion of the chain corresponds to 70-453 (HFDCSGKYRC…HEQLERDLKT (384 aa)). The LDL-receptor class A domain maps to 72-108 (DCSGKYRCHSSFKCIELTARCDGVSDCKNAEDEYRCV). 10 disulfide bridges follow: Cys73–Cys85, Cys79–Cys98, Cys92–Cys107, Cys129–Cys194, Cys142–Cys204, Cys207–Cys324, Cys242–Cys258, Cys338–Cys406, Cys369–Cys385, and Cys396–Cys424. The SRCR domain occupies 104–205 (EYRCVRVSGQ…SGHVVTLKCS (102 aa)). The Peptidase S1 domain occupies 217–448 (IVGGNMSSLT…FLDWIHEQLE (232 aa)). Asn221 carries N-linked (GlcNAc...) asparagine glycosylation. Active-site charge relay system residues include His257 and Asp304. Ser400 functions as the Charge relay system in the catalytic mechanism.

Belongs to the peptidase S1 family. Undergoes autoproteolytic activation. Strongly expressed in liver, cochlea, brain, cerebellum, spleen, lung, and muscle and at a lower degree in retina, kidney, and heart. Expressed in the spiral ganglion, the cells supporting the organ of Corti and the stria vascularis. Isoform 2 is strongly expressed only in the cochlea with very faint expression in the cerebellum, spleen and muscle.

Its subcellular location is the endoplasmic reticulum membrane. Probable serine protease that plays a role in hearing. Acts as a permissive factor for cochlear hair cell survival and activation at the onset of hearing and is required for saccular hair cell survival. Activates ENaC (in vitro). The polypeptide is Transmembrane protease serine 3 (Tmprss3) (Mus musculus (Mouse)).